A 670-amino-acid chain; its full sequence is DNA ligase (670 aa).

Residues 33 to 37 (DAEFD), 82 to 83 (SL), and Glu-113 contribute to the NAD(+) site. The active-site N6-AMP-lysine intermediate is Lys-115. NAD(+) contacts are provided by Arg-136, Glu-170, Lys-285, and Lys-309. Residues Cys-403, Cys-406, Cys-421, and Cys-427 each coordinate Zn(2+). Residues 587-670 (EQNLYLSGKT…EVLKAGDNNG (84 aa)) enclose the BRCT domain.

It belongs to the NAD-dependent DNA ligase family. LigA subfamily. Mg(2+) serves as cofactor. Mn(2+) is required as a cofactor.

The catalysed reaction is NAD(+) + (deoxyribonucleotide)n-3'-hydroxyl + 5'-phospho-(deoxyribonucleotide)m = (deoxyribonucleotide)n+m + AMP + beta-nicotinamide D-nucleotide.. In terms of biological role, DNA ligase that catalyzes the formation of phosphodiester linkages between 5'-phosphoryl and 3'-hydroxyl groups in double-stranded DNA using NAD as a coenzyme and as the energy source for the reaction. It is essential for DNA replication and repair of damaged DNA. In Halothermothrix orenii (strain H 168 / OCM 544 / DSM 9562), this protein is DNA ligase.